Here is an 83-residue protein sequence, read N- to C-terminus: Disintegrin isoform D-3 (83 aa).

In terms of domain architecture, Disintegrin spans 2 to 83; that stretch reads PPVCGNELLE…GKSSDCPWNH (82 aa). 7 cysteine pairs are disulfide-bonded: Cys5-Cys24, Cys16-Cys34, Cys18-Cys29, Cys28-Cys51, Cys42-Cys48, Cys47-Cys72, and Cys60-Cys79. A Cell attachment site motif is present at residues 64–66; it reads RGD.

This sequence belongs to the venom metalloproteinase (M12B) family. P-II subfamily. P-IIa sub-subfamily. In terms of assembly, monomer (disintegrin). As to expression, expressed by the venom gland.

The protein localises to the secreted. Functionally, inhibits fibrinogen interaction with platelets. Acts by binding to alpha-IIb/beta-3 (ITGA2B/ITGB3) on the platelet surface and inhibits aggregation induced by ADP, thrombin, platelet-activating factor and collagen. The sequence is that of Disintegrin isoform D-3 from Bitis arietans (African puff adder).